The sequence spans 250 residues: 2,3-bisphosphoglycerate-dependent phosphoglycerate mutase (250 aa).

Substrate contacts are provided by residues 10-17 (RHGESVWN), 23-24 (TG), arginine 62, 89-92 (ERHY), lysine 100, 116-117 (RR), and 185-186 (GN). The active-site Tele-phosphohistidine intermediate is the histidine 11. The active-site Proton donor/acceptor is glutamate 89.

The protein belongs to the phosphoglycerate mutase family. BPG-dependent PGAM subfamily. In terms of assembly, homodimer.

The catalysed reaction is (2R)-2-phosphoglycerate = (2R)-3-phosphoglycerate. Its pathway is carbohydrate degradation; glycolysis; pyruvate from D-glyceraldehyde 3-phosphate: step 3/5. Its function is as follows. Catalyzes the interconversion of 2-phosphoglycerate and 3-phosphoglycerate. This is 2,3-bisphosphoglycerate-dependent phosphoglycerate mutase from Proteus mirabilis (strain HI4320).